A 297-amino-acid polypeptide reads, in one-letter code: HTH-type transcriptional regulator ArgP (297 aa).

The 57-residue stretch at 4–60 (PDYRTLQALDAVIRERGFERAAQKLCITQSAVSQRIKQLENLFGQPLLVRTVPPRPT) folds into the HTH lysR-type domain. The segment at residues 21 to 40 (FERAAQKLCITQSAVSQRIK) is a DNA-binding region (H-T-H motif).

Belongs to the LysR transcriptional regulatory family. In terms of assembly, homodimer.

Functionally, controls the transcription of genes involved in arginine and lysine metabolism. In Serratia proteamaculans (strain 568), this protein is HTH-type transcriptional regulator ArgP.